A 431-amino-acid polypeptide reads, in one-letter code: MGKNVVVLGTQWGDEGKGKIVDLLTEQSKYVVRYQGGHNAGHTLVIDGEKTVLHLIPSGILRDNVKCIIGNGVVLAPDALMTEIKMLKERGVPVEERLLISEACPLILPFHCALDIAREKARGNNAIGTTGRGIGPAYEDKVSRRGLRVGDLFDAELFAEKLKEVMAYHNFMLTEYYKCEAVDYEETLKDALAIADYLKSMCVDVTELLDQARKAGEPILFEGAQGTLLDIDHGTYPFVTSSNTTAGGVATGSGFGPRHLDYVLGIMKAYTTRVGAGPFPTELQCEIGDHLGTKGHEFGATTGRKRRPGWLDVVAMKRAVQINSISGFCLTKLDVLDGLEEVKICVGYQYPDGSVATVTPLAAEGYEQVTPVLETMPGWSENTFGATSVEQLPQAALNYIKRLEELLDTPIDIISTGPDRNETMILVNPFS.

GTP-binding positions include 13 to 19 (GDEGKGK) and 41 to 43 (GHT). D14 (proton acceptor) is an active-site residue. The Mg(2+) site is built by D14 and G41. Residues 14–17 (DEGK), 39–42 (NAGH), T130, R144, Q225, T240, and R304 contribute to the IMP site. Residue H42 is the Proton donor of the active site. 300-306 (ATTGRKR) contributes to the substrate binding site. Residues R306, 332–334 (KLD), and 415–417 (STG) each bind GTP.

It belongs to the adenylosuccinate synthetase family. As to quaternary structure, homodimer. Requires Mg(2+) as cofactor.

It localises to the cytoplasm. The enzyme catalyses IMP + L-aspartate + GTP = N(6)-(1,2-dicarboxyethyl)-AMP + GDP + phosphate + 2 H(+). It functions in the pathway purine metabolism; AMP biosynthesis via de novo pathway; AMP from IMP: step 1/2. Functionally, plays an important role in the de novo pathway of purine nucleotide biosynthesis. Catalyzes the first committed step in the biosynthesis of AMP from IMP. The sequence is that of Adenylosuccinate synthetase from Shewanella woodyi (strain ATCC 51908 / MS32).